A 190-amino-acid chain; its full sequence is RNA pyrophosphohydrolase (190 aa).

One can recognise a Nudix hydrolase domain in the interval 6 to 149 (GYRPNVGIVL…KRSVYARALC (144 aa)). The Nudix box signature appears at 38-59 (GGMHSDETPVEAMYRELNEETG).

This sequence belongs to the Nudix hydrolase family. RppH subfamily. It depends on a divalent metal cation as a cofactor.

Functionally, accelerates the degradation of transcripts by removing pyrophosphate from the 5'-end of triphosphorylated RNA, leading to a more labile monophosphorylated state that can stimulate subsequent ribonuclease cleavage. The chain is RNA pyrophosphohydrolase from Xylella fastidiosa (strain Temecula1 / ATCC 700964).